Here is a 276-residue protein sequence, read N- to C-terminus: Tryptophan synthase alpha chain (276 aa).

Catalysis depends on proton acceptor residues E46 and E57.

It belongs to the TrpA family. As to quaternary structure, tetramer of two alpha and two beta chains.

The enzyme catalyses (1S,2R)-1-C-(indol-3-yl)glycerol 3-phosphate + L-serine = D-glyceraldehyde 3-phosphate + L-tryptophan + H2O. Its pathway is amino-acid biosynthesis; L-tryptophan biosynthesis; L-tryptophan from chorismate: step 5/5. Its function is as follows. The alpha subunit is responsible for the aldol cleavage of indoleglycerol phosphate to indole and glyceraldehyde 3-phosphate. This chain is Tryptophan synthase alpha chain, found in Halobacterium salinarum (strain ATCC 29341 / DSM 671 / R1).